A 346-amino-acid polypeptide reads, in one-letter code: tRNA/tmRNA (uracil-C(5))-methyltransferase (346 aa).

Residues glutamine 168, tyrosine 197, asparagine 202, glutamate 218, and aspartate 278 each contribute to the S-adenosyl-L-methionine site. Cysteine 303 (nucleophile) is an active-site residue. The active-site Proton acceptor is glutamate 337.

The protein belongs to the class I-like SAM-binding methyltransferase superfamily. RNA M5U methyltransferase family. TrmA subfamily.

The enzyme catalyses uridine(54) in tRNA + S-adenosyl-L-methionine = 5-methyluridine(54) in tRNA + S-adenosyl-L-homocysteine + H(+). The catalysed reaction is uridine(341) in tmRNA + S-adenosyl-L-methionine = 5-methyluridine(341) in tmRNA + S-adenosyl-L-homocysteine + H(+). Functionally, dual-specificity methyltransferase that catalyzes the formation of 5-methyluridine at position 54 (m5U54) in all tRNAs, and that of position 341 (m5U341) in tmRNA (transfer-mRNA). In Campylobacter lari (strain RM2100 / D67 / ATCC BAA-1060), this protein is tRNA/tmRNA (uracil-C(5))-methyltransferase.